Here is a 459-residue protein sequence, read N- to C-terminus: MSNKAWGGRFEVQPEEWVDDFNASITFDQTLIDQDIEGSIAHATMLANQGIISQQDSEQIIQGLKSIQHDYHQDQIQFSASLEDIHLNIEHELIKRIGDAGGKLHTGRSRNDQVATDMHLYTKKQVQDIIALIKSLQSVIVDIASNNVDTIMPGYTHLQRAQPISFAHHIMTYFWMLQRDQQRFEDSLKRIDINPLGAAALSGTTYPIDRHETTALLNFGSLYENSLDAVSDRDYIIETLHNISLTMVHLSRFAEEIIFWSTDEAKFITLSDAFSTGSSIMPQKKNPDMAELIRGKVGRTTGHLMSMLMTLKGLPLAYNKDMQEDKEGLFDAVHTIKGSLRIFEGMIQTMTINKERLNQTVKEDFSNATELADYLVTKNIPFRTAHEIVGKIVLECIQQGHYLLDVPLATYQQHHSSIDADIYDYLQPENCLKRRQSYGSTGQSSVIQQLDVAKQLLSQ.

This sequence belongs to the lyase 1 family. Argininosuccinate lyase subfamily.

Its subcellular location is the cytoplasm. It catalyses the reaction 2-(N(omega)-L-arginino)succinate = fumarate + L-arginine. It participates in amino-acid biosynthesis; L-arginine biosynthesis; L-arginine from L-ornithine and carbamoyl phosphate: step 3/3. The polypeptide is Argininosuccinate lyase (Staphylococcus aureus (strain bovine RF122 / ET3-1)).